The following is a 283-amino-acid chain: Elongation factor Ts (283 aa).

The segment at 80–83 (TDFV) is involved in Mg(2+) ion dislocation from EF-Tu.

The protein belongs to the EF-Ts family.

The protein localises to the cytoplasm. Associates with the EF-Tu.GDP complex and induces the exchange of GDP to GTP. It remains bound to the aminoacyl-tRNA.EF-Tu.GTP complex up to the GTP hydrolysis stage on the ribosome. The sequence is that of Elongation factor Ts from Salmonella choleraesuis (strain SC-B67).